Here is a 1384-residue protein sequence, read N- to C-terminus: ATP-dependent RNA helicase TDRD9 (1384 aa).

Positions 35–60 (EAPREEVQRSEEVPSEAPTAQAQDPV) are disordered. The segment covering 36-46 (APREEVQRSEE) has biased composition (basic and acidic residues). The region spanning 144–310 (ISLIESNSVV…FAVPVQNKMN (167 aa)) is the Helicase ATP-binding domain. 157–164 (GATGSGKS) is an ATP binding site. The short motif at 256 to 259 (DEVH) is the DEAH box element. Residues 379 to 546 (SGAQFVSERS…VLKVKLLDMG (168 aa)) form the Helicase C-terminal domain. Residues 946–1006 (HPHPDLVCLA…REIPCQLLEL (61 aa)) enclose the Tudor domain.

Belongs to the DEAD box helicase family. DEAH subfamily. As to quaternary structure, interacts with piRNA-associated proteins PIWIL1 and PIWIL4.

It localises to the cytoplasm. It is found in the nucleus. The catalysed reaction is ATP + H2O = ADP + phosphate + H(+). Its function is as follows. ATP-binding RNA helicase which plays a central role during spermatogenesis by repressing transposable elements and preventing their mobilization, which is essential for the germline integrity. Acts via the piRNA metabolic process, which mediates the repression of transposable elements during meiosis by forming complexes composed of piRNAs and Piwi proteins and governs the methylation and subsequent repression of transposons. Acts downstream of piRNA biogenesis: exclusively required for transposon silencing in the nucleus, suggesting that it acts as a nuclear effector in the nucleus together with PIWIL4. The protein is ATP-dependent RNA helicase TDRD9 of Rattus norvegicus (Rat).